Here is a 476-residue protein sequence, read N- to C-terminus: Ubiquitin-conjugating enzyme E2 variant 3 (476 aa).

Residues 2-145 form the UEV domain; that stretch reads EFSAETLRQQ…EEELPLYSLS (144 aa). 185-213 contributes to the NAD(+) binding site; that stretch reads GDMALACLLAVSAKGTAGKLLLLDPTDGE.

The protein in the N-terminal section; belongs to the ubiquitin-conjugating enzyme family. UEV subfamily. It in the C-terminal section; belongs to the LDH/MDH superfamily. In terms of assembly, homodimer.

Functionally, possible negative regulator of polyubiquitination. This is Ubiquitin-conjugating enzyme E2 variant 3 (uevld) from Xenopus tropicalis (Western clawed frog).